A 524-amino-acid chain; its full sequence is Nucleoporin NUP56 (524 aa).

A disordered region spans residues 1–219 (MADDPHNTST…SSMAKFASST (219 aa)). 3 stretches are compositionally biased toward basic and acidic residues: residues 28 to 80 (VKED…EPEK), 114 to 168 (THDE…KEVE), and 179 to 199 (SAEKPKIEEKKDESKDTKVDK). Residues 37–44 (ARRELKQT) carry the Nuclear localization signal motif. The stretch at 111–133 (KKRTHDELEQDGKEEEEKKEGEK) forms a coiled coil. Polar residues predominate over residues 200–219 (PQTSSSAFANSSMAKFASST). 7 FG repeats span residues 223–224 (FG), 226–227 (FG), 237–238 (FG), 247–248 (FG), 266–267 (FG), 312–313 (FG), and 328–329 (FG). Disordered regions lie at residues 247-284 (FGSKSADASAAPAGPPKLSFGSASAASPFASLNGQAGG) and 300-371 (GSSA…GEEK). Residues 248–277 (GSKSADASAAPAGPPKLSFGSASAASPFAS) are compositionally biased toward low complexity. 2 stretches are compositionally biased toward acidic residues: residues 332-345 (ESDEEDEGEGEEGE) and 352-362 (GEGEEKEEEEK). The stretch at 345–376 (EENKSENGEGEEKEEEEKEEKASGEEKKKFKL) forms a coiled coil. Residues 377–475 (QKVHIDDGEG…TPILPAMKFQ (99 aa)) enclose the RanBD1 domain. Residues 503–524 (SQANATQFSNMVEKIKEKLAAA) are a coiled coil.

The nuclear pore complex (NPC) constitutes the exclusive means of nucleocytoplasmic transport. NPCs allow the passive diffusion of ions and small molecules and the active, nuclear transport receptor-mediated bidirectional transport of macromolecules such as proteins, RNAs, ribonucleoparticles (RNPs), and ribosomal subunits across the nuclear envelope. The 55-60 MDa NPC is composed of at least 28 different subunits: AMO1, ELYS, GLE1, GLE2, MLP1, NDC1, NIC96, NSP1, NUP133, NUP145, NUP152, NUP159, NUP170, NUP188, NUP192, NUP37, NUP49, NUP53, NUP56, NUP57, NUP82, NUP84, NUP85, POM152, POM33, POM34, SEC13 and SEH1. Due to its 8-fold rotational symmetry, all subunits are present with 8 copies or multiples thereof.

The protein resides in the nucleus. The protein localises to the nuclear pore complex. It localises to the nucleus membrane. Functionally, functions as a component of the nuclear pore complex (NPC). NPC components, collectively referred to as nucleoporins (NUPs), can play the role of both NPC structural components and of docking or interaction partners for transiently associated nuclear transport factors. Active directional transport is assured by both, a Phe-Gly (FG) repeat affinity gradient for these transport factors across the NPC and a transport cofactor concentration gradient across the nuclear envelope (GSP1 and GSP2 GTPases associated predominantly with GTP in the nucleus, with GDP in the cytoplasm). In Chaetomium thermophilum (strain DSM 1495 / CBS 144.50 / IMI 039719) (Thermochaetoides thermophila), this protein is Nucleoporin NUP56 (NUP56).